A 196-amino-acid chain; its full sequence is ATP-dependent Clp protease proteolytic subunit (196 aa).

Serine 96 acts as the Nucleophile in catalysis. The active site involves histidine 121.

It belongs to the peptidase S14 family. Fourteen ClpP subunits assemble into 2 heptameric rings which stack back to back to give a disk-like structure with a central cavity, resembling the structure of eukaryotic proteasomes.

The protein localises to the cytoplasm. It catalyses the reaction Hydrolysis of proteins to small peptides in the presence of ATP and magnesium. alpha-casein is the usual test substrate. In the absence of ATP, only oligopeptides shorter than five residues are hydrolyzed (such as succinyl-Leu-Tyr-|-NHMec, and Leu-Tyr-Leu-|-Tyr-Trp, in which cleavage of the -Tyr-|-Leu- and -Tyr-|-Trp bonds also occurs).. Cleaves peptides in various proteins in a process that requires ATP hydrolysis. Has a chymotrypsin-like activity. Plays a major role in the degradation of misfolded proteins. This Streptococcus gordonii (strain Challis / ATCC 35105 / BCRC 15272 / CH1 / DL1 / V288) protein is ATP-dependent Clp protease proteolytic subunit.